The chain runs to 160 residues: Nascent polypeptide-associated complex subunit beta (160 aa).

2 disordered regions span residues 16 to 36 and 118 to 160; these read GGKGTPRRKVKKVHKSSGTDD and ESYQ…TEVE. The span at 20–30 shows a compositional bias: basic residues; the sequence is TPRRKVKKVHK. Positions 33–98 constitute an NAC-A/B domain; the sequence is GTDDKKLQTA…GEDKELTELV (66 aa). Residues 124-134 show a composition bias toward basic and acidic residues; it reads QKEKGEDGDKK. A compositionally biased stretch (acidic residues) spans 135 to 145; that stretch reads DDDDEDDDDIP.

This sequence belongs to the NAC-beta family. In terms of assembly, part of the nascent polypeptide-associated complex (NAC), consisting of EGD2 and EGD1. NAC associates with ribosomes via EGD1.

The protein localises to the cytoplasm. The protein resides in the nucleus. Component of the nascent polypeptide-associated complex (NAC), a dynamic component of the ribosomal exit tunnel, protecting the emerging polypeptides from interaction with other cytoplasmic proteins to ensure appropriate nascent protein targeting. The NAC complex also promotes mitochondrial protein import by enhancing productive ribosome interactions with the outer mitochondrial membrane and blocks the inappropriate interaction of ribosomes translating non-secretory nascent polypeptides with translocation sites in the membrane of the endoplasmic reticulum. EGD1 may act as a transcription factor that exert a negative effect on the expression of several genes that are transcribed by RNA polymerase II. The polypeptide is Nascent polypeptide-associated complex subunit beta (EGD1) (Phaeosphaeria nodorum (strain SN15 / ATCC MYA-4574 / FGSC 10173) (Glume blotch fungus)).